A 348-amino-acid polypeptide reads, in one-letter code: NADH-cytochrome b5 reductase 2 (348 aa).

The chain crosses the membrane as a helical span at residues 41-61; it reads TLLYGAAAAAVAGAGYYFLGG. The FAD-binding FR-type domain maps to 97–202; sequence QGWVSLKLEE…KGPLPKYPWT (106 aa). FAD is bound at residue 205–240; the sequence is KHGHIALVAGGTGITPMFQLCRAIFNNPDDQTKVTL.

It belongs to the flavoprotein pyridine nucleotide cytochrome reductase family. FAD is required as a cofactor.

The protein localises to the mitochondrion outer membrane. It carries out the reaction 2 Fe(III)-[cytochrome b5] + NADH = 2 Fe(II)-[cytochrome b5] + NAD(+) + H(+). Its function is as follows. May mediate the reduction of outer membrane cytochrome b5. The polypeptide is NADH-cytochrome b5 reductase 2 (MCR1) (Chaetomium globosum (strain ATCC 6205 / CBS 148.51 / DSM 1962 / NBRC 6347 / NRRL 1970) (Soil fungus)).